The chain runs to 450 residues: Divalent metal cation transporter MntH (450 aa).

11 helical membrane passes run 34–54 (LSFL…GNWI), 61–81 (AQYG…AMLL), 108–128 (IAII…IAEV), 141–161 (IPLI…LFIM), 170–190 (AIVG…VYIS), 212–232 (GILY…NLYL), 263–283 (IQLS…ASLF), 305–325 (PVLG…ALLA), 361–381 (SLAV…AAKI), 383–403 (QLLV…LIPL), and 422–442 (VNII…YLIV).

Belongs to the NRAMP family.

It localises to the cell membrane. In terms of biological role, h(+)-stimulated, divalent metal cation uptake system. The sequence is that of Divalent metal cation transporter MntH from Staphylococcus aureus (strain JH1).